Consider the following 98-residue polypeptide: NADH-ubiquinone oxidoreductase chain 4L (98 aa).

A run of 3 helical transmembrane segments spans residues 1–21, 29–49, and 59–79; these read MSLVHMNILLAFTMSLTGLLM, ALLCLEGMMLSLFILMTITIL, and TPIILLVFAACEAAVGLALLV.

The protein belongs to the complex I subunit 4L family. Core subunit of respiratory chain NADH dehydrogenase (Complex I) which is composed of 45 different subunits.

It is found in the mitochondrion inner membrane. The catalysed reaction is a ubiquinone + NADH + 5 H(+)(in) = a ubiquinol + NAD(+) + 4 H(+)(out). Core subunit of the mitochondrial membrane respiratory chain NADH dehydrogenase (Complex I) which catalyzes electron transfer from NADH through the respiratory chain, using ubiquinone as an electron acceptor. Part of the enzyme membrane arm which is embedded in the lipid bilayer and involved in proton translocation. This Lipotes vexillifer (Yangtze river dolphin) protein is NADH-ubiquinone oxidoreductase chain 4L (MT-ND4L).